Consider the following 116-residue polypeptide: HTH-type transcriptional regulator AnsR (116 aa).

The region spanning 6 to 60 (LTELRKKKNWSLQYTADLLGIAKSTYAGYESGYRRPSLEALAMLADLFDTTCDEL) is the HTH cro/C1-type domain. A DNA-binding region (H-T-H motif) is located at residues 17–36 (LQYTADLLGIAKSTYAGYES).

Its function is as follows. Transcriptional repressor for the ans operon coding for L-asparaginase and L-aspartase. NH4(+) may influence this repression. This Bacillus subtilis (strain 168) protein is HTH-type transcriptional regulator AnsR (ansR).